The primary structure comprises 319 residues: tRNA uridine(34) hydroxylase (319 aa).

The 95-residue stretch at 127–221 (KQEDTVIIDA…YGKDPEVQGE (95 aa)) folds into the Rhodanese domain. Cys181 functions as the Cysteine persulfide intermediate in the catalytic mechanism.

The protein belongs to the TrhO family.

The enzyme catalyses uridine(34) in tRNA + AH2 + O2 = 5-hydroxyuridine(34) in tRNA + A + H2O. Functionally, catalyzes oxygen-dependent 5-hydroxyuridine (ho5U) modification at position 34 in tRNAs. This is tRNA uridine(34) hydroxylase from Bacillus cereus (strain B4264).